Here is a 641-residue protein sequence, read N- to C-terminus: RING finger containing E3 ubiquitin-protein ligase WSV403 (641 aa).

The RING-type; atypical zinc-finger motif lies at 329-371 (CVGCLYDIEDEKRCYKLPCGHFMHTFCLSNKCSKANFRCVKCF).

It catalyses the reaction S-ubiquitinyl-[E2 ubiquitin-conjugating enzyme]-L-cysteine + [acceptor protein]-L-lysine = [E2 ubiquitin-conjugating enzyme]-L-cysteine + N(6)-ubiquitinyl-[acceptor protein]-L-lysine.. Its pathway is protein modification; protein ubiquitination. Probable E3 ubiquitin-protein ligase which accepts ubiquitin from an E2 ubiquitin-conjugating enzyme in the form of a thioester and then directly transfers the ubiquitin to targeted substrates. This White spot syndrome virus (isolate Shrimp/China/Tongan/1996) (WSSV) protein is RING finger containing E3 ubiquitin-protein ligase WSV403.